The chain runs to 343 residues: N-acetyl-gamma-glutamyl-phosphate reductase (343 aa).

The active site involves C147.

It belongs to the NAGSA dehydrogenase family. Type 1 subfamily.

It localises to the cytoplasm. The enzyme catalyses N-acetyl-L-glutamate 5-semialdehyde + phosphate + NADP(+) = N-acetyl-L-glutamyl 5-phosphate + NADPH + H(+). It participates in amino-acid biosynthesis; L-arginine biosynthesis; N(2)-acetyl-L-ornithine from L-glutamate: step 3/4. Its function is as follows. Catalyzes the NADPH-dependent reduction of N-acetyl-5-glutamyl phosphate to yield N-acetyl-L-glutamate 5-semialdehyde. The chain is N-acetyl-gamma-glutamyl-phosphate reductase from Staphylococcus aureus (strain MRSA252).